The following is a 499-amino-acid chain: uncharacterized protein (499 aa).

An RING-type; degenerate zinc finger spans residues 10-57 (CGICGQEYSEDEKLLIPRILTECGHTICTGCAGKIKGQSSIIACPFDR). A B box-type; degenerate zinc finger spans residues 101–147 (NKNGVCDENTNHHASNYCETCDADLCEECWTWIHSISTLAHHEKKMI).

This is an uncharacterized protein from Caenorhabditis elegans.